Reading from the N-terminus, the 151-residue chain is Cytochrome c oxidase subunit 5B, mitochondrial (151 aa).

The N-terminal 17 residues, 1 to 17 (MLRTSLTKGARLTGTRF), are a transit peptide targeting the mitochondrion. Over 18 to 85 (VQTKALSKAT…EWGPRRPVHG (68 aa)) the chain is Mitochondrial matrix. Residues 86-108 (KGDVAFITKGVFLGLGISFGLFG) traverse the membrane as a helical segment. The Mitochondrial intermembrane portion of the chain corresponds to 109 to 151 (LVRLLANPETPKTMNREWQLKSDEYLKSKNANPWGGYSQVQSK).

This sequence belongs to the cytochrome c oxidase IV family. In terms of assembly, component of the cytochrome c oxidase (complex IV, CIV), a multisubunit enzyme composed of 12 subunits. The complex is composed of a catalytic core of 3 subunits COX1, COX2 and COX3, encoded in the mitochondrial DNA, and 9 supernumerary subunits COX4, COX5A (or COX5B), COX6, COX7, COX8, COX9, COX12, COX13 and COX26, which are encoded in the nuclear genome. COX5A is the predominant subunit V during aerobic/normoxic growth, it gets replaced by COX5B under anaerobic/hypoxic conditions. The complex exists as a monomer or a dimer and forms supercomplexes (SCs) in the inner mitochondrial membrane with a dimer of ubiquinol-cytochrome c oxidoreductase (cytochrome b-c1 complex, complex III, CIII), resulting in 2 different assemblies (supercomplexes III(2)IV and III(2)IV(2)).

Its subcellular location is the mitochondrion inner membrane. It participates in energy metabolism; oxidative phosphorylation. Its function is as follows. Component of the cytochrome c oxidase, the last enzyme in the mitochondrial electron transport chain which drives oxidative phosphorylation. The respiratory chain contains 3 multisubunit complexes succinate dehydrogenase (complex II, CII), ubiquinol-cytochrome c oxidoreductase (cytochrome b-c1 complex, complex III, CIII) and cytochrome c oxidase (complex IV, CIV), that cooperate to transfer electrons derived from NADH and succinate to molecular oxygen, creating an electrochemical gradient over the inner membrane that drives transmembrane transport and the ATP synthase. Cytochrome c oxidase is the component of the respiratory chain that catalyzes the reduction of oxygen to water. Electrons originating from reduced cytochrome c in the intermembrane space (IMS) are transferred via the dinuclear copper A center (CU(A)) of COX2 and heme A of COX1 to the active site in COX1, a binuclear center (BNC) formed by heme A3 and copper B (CU(B)). The BNC reduces molecular oxygen to 2 water molecules using 4 electrons from cytochrome c in the IMS and 4 protons from the mitochondrial matrix. The polypeptide is Cytochrome c oxidase subunit 5B, mitochondrial (COX5B) (Saccharomyces cerevisiae (strain ATCC 204508 / S288c) (Baker's yeast)).